The sequence spans 125 residues: Small ribosomal subunit protein uS12 (125 aa).

Asp89 is subject to 3-methylthioaspartic acid. Residues 105-125 are disordered; it reads AGVKDRKQARSKYGAKRPKAA. Positions 113 to 125 are enriched in basic residues; it reads ARSKYGAKRPKAA.

Belongs to the universal ribosomal protein uS12 family. Part of the 30S ribosomal subunit. Contacts proteins S8 and S17. May interact with IF1 in the 30S initiation complex.

With S4 and S5 plays an important role in translational accuracy. Its function is as follows. Interacts with and stabilizes bases of the 16S rRNA that are involved in tRNA selection in the A site and with the mRNA backbone. Located at the interface of the 30S and 50S subunits, it traverses the body of the 30S subunit contacting proteins on the other side and probably holding the rRNA structure together. The combined cluster of proteins S8, S12 and S17 appears to hold together the shoulder and platform of the 30S subunit. The polypeptide is Small ribosomal subunit protein uS12 (Methylobacillus flagellatus (strain ATCC 51484 / DSM 6875 / VKM B-1610 / KT)).